A 413-amino-acid polypeptide reads, in one-letter code: Arginine biosynthesis bifunctional protein ArgJ (413 aa).

Residues Thr-154, Lys-180, Thr-191, Glu-277, Asn-408, and Thr-413 each contribute to the substrate site. The active-site Nucleophile is Thr-191.

It belongs to the ArgJ family. As to quaternary structure, heterotetramer of two alpha and two beta chains.

It is found in the cytoplasm. The enzyme catalyses N(2)-acetyl-L-ornithine + L-glutamate = N-acetyl-L-glutamate + L-ornithine. It catalyses the reaction L-glutamate + acetyl-CoA = N-acetyl-L-glutamate + CoA + H(+). It functions in the pathway amino-acid biosynthesis; L-arginine biosynthesis; L-ornithine and N-acetyl-L-glutamate from L-glutamate and N(2)-acetyl-L-ornithine (cyclic): step 1/1. It participates in amino-acid biosynthesis; L-arginine biosynthesis; N(2)-acetyl-L-ornithine from L-glutamate: step 1/4. Its function is as follows. Catalyzes two activities which are involved in the cyclic version of arginine biosynthesis: the synthesis of N-acetylglutamate from glutamate and acetyl-CoA as the acetyl donor, and of ornithine by transacetylation between N(2)-acetylornithine and glutamate. The sequence is that of Arginine biosynthesis bifunctional protein ArgJ from Synechocystis sp. (strain ATCC 27184 / PCC 6803 / Kazusa).